The following is a 365-amino-acid chain: Glutamate 5-kinase 1 (365 aa).

K9 contacts ATP. S49, D136, and N148 together coordinate substrate. Residues 168-169 (TD) and 210-216 (TGGMKSK) each bind ATP. The PUA domain occupies 276–353 (SGKITVDEGA…DEFHHEEGIE (78 aa)).

This sequence belongs to the glutamate 5-kinase family.

The protein resides in the cytoplasm. The catalysed reaction is L-glutamate + ATP = L-glutamyl 5-phosphate + ADP. The protein operates within amino-acid biosynthesis; L-proline biosynthesis; L-glutamate 5-semialdehyde from L-glutamate: step 1/2. In terms of biological role, catalyzes the transfer of a phosphate group to glutamate to form L-glutamate 5-phosphate. This chain is Glutamate 5-kinase 1, found in Bacillus licheniformis (strain ATCC 14580 / DSM 13 / JCM 2505 / CCUG 7422 / NBRC 12200 / NCIMB 9375 / NCTC 10341 / NRRL NRS-1264 / Gibson 46).